Reading from the N-terminus, the 251-residue chain is 1-(5-phosphoribosyl)-5-[(5-phosphoribosylamino)methylideneamino] imidazole-4-carboxamide isomerase (251 aa).

The active-site Proton acceptor is the Asp-8. Asp-131 functions as the Proton donor in the catalytic mechanism.

It belongs to the HisA/HisF family.

Its subcellular location is the cytoplasm. It catalyses the reaction 1-(5-phospho-beta-D-ribosyl)-5-[(5-phospho-beta-D-ribosylamino)methylideneamino]imidazole-4-carboxamide = 5-[(5-phospho-1-deoxy-D-ribulos-1-ylimino)methylamino]-1-(5-phospho-beta-D-ribosyl)imidazole-4-carboxamide. Its pathway is amino-acid biosynthesis; L-histidine biosynthesis; L-histidine from 5-phospho-alpha-D-ribose 1-diphosphate: step 4/9. The chain is 1-(5-phosphoribosyl)-5-[(5-phosphoribosylamino)methylideneamino] imidazole-4-carboxamide isomerase from Burkholderia ambifaria (strain MC40-6).